We begin with the raw amino-acid sequence, 509 residues long: 3-ketoacyl-CoA synthase 11 (509 aa).

2 helical membrane-spanning segments follow: residues 36–56 (LITH…AAQI) and 75–95 (LISV…YFMT). Positions 92–381 (YFMTRPRPVY…FFATLVGRKL (290 aa)) constitute an FAE domain. Residues Cys-236, His-315, His-399, His-403, and Asn-436 contribute to the active site.

Belongs to the thiolase-like superfamily. Chalcone/stilbene synthases family. As to expression, only expressed in guard cells. Expressed in siliques, flowers, leaves, stems, roots and seedlings.

It is found in the membrane. It carries out the reaction a very-long-chain acyl-CoA + malonyl-CoA + H(+) = a very-long-chain 3-oxoacyl-CoA + CO2 + CoA. Its pathway is lipid metabolism; fatty acid biosynthesis. In terms of biological role, active on both saturated and mono-unsaturated acyl chains C16 to C20. The sequence is that of 3-ketoacyl-CoA synthase 11 from Arabidopsis thaliana (Mouse-ear cress).